Here is a 125-residue protein sequence, read N- to C-terminus: MVSAVTTMGCMKAAGVSLLLLYFLLNAADSHPNFDSSSMACGECSLGLNRLFSRDRPLYQCMGCCFSRAYPTPQTAIQTMAIPKNITSEAKCCVAKHSYETKVDDITVRNHTECHCSTCYYHKLI.

Positions 1–30 are cleaved as a signal peptide; the sequence is MVSAVTTMGCMKAAGVSLLLLYFLLNAADS. Cystine bridges form between cysteine 41–cysteine 64, cysteine 44–cysteine 93, cysteine 61–cysteine 114, cysteine 65–cysteine 116, and cysteine 92–cysteine 119. Asparagine 85 and asparagine 110 each carry an N-linked (GlcNAc...) asparagine glycan.

Belongs to the glycoprotein hormones subunit alpha family. Heterodimer. Glycoprotein hormones are heterodimers composed of a common alpha chain described here and a unique beta chain which confers their biological specificity to the different hormones.

It localises to the secreted. In terms of biological role, shared alpha chain of heterodimeric glycoprotein hormones. These hormones bind specific receptors on target cells that in turn activate downstream signaling pathways. Involved in gametogenesis and steroidogenesis. This is Glycoprotein hormones alpha chain (cga) from Fundulus heteroclitus (Killifish).